A 71-amino-acid polypeptide reads, in one-letter code: Prokaryotic ubiquitin-like protein Pup (71 aa).

The span at 1–18 (MATRDSGGQSQTGRSQQG) shows a compositional bias: low complexity. The disordered stretch occupies residues 1-42 (MATRDSGGQSQTGRSQQGEEIEDVTTEASPEVAERHAEITED). The ARC ATPase binding stretch occupies residues 27–65 (EASPEVAERHAEITEDVDDLLDEIDSVLEENAEEFVRGY). Residues 31 to 60 (EVAERHAEITEDVDDLLDEIDSVLEENAEE) are a coiled coil. An Isoglutamyl lysine isopeptide (Glu-Lys) (interchain with K-? in acceptor proteins) cross-link involves residue glutamate 71.

Belongs to the prokaryotic ubiquitin-like protein family. As to quaternary structure, strongly interacts with the proteasome-associated ATPase ARC through a hydrophobic interface; the interacting region of Pup lies in its C-terminal half. There is one Pup binding site per ARC hexamer ring.

The protein operates within protein degradation; proteasomal Pup-dependent pathway. Functionally, protein modifier that is covalently attached to lysine residues of substrate proteins, thereby targeting them for proteasomal degradation. The tagging system is termed pupylation. The chain is Prokaryotic ubiquitin-like protein Pup from Salinispora arenicola (strain CNS-205).